We begin with the raw amino-acid sequence, 238 residues long: MAKLGVNIDHIANVRQARQTVEPDPVQFAFLAELGGADSITIHLREDRRHIQDRDIYLLKDTIKTKLNLEMAATEEMLRISKKLLPDYVTLVPEKRKEITTEGGLDVKNNEKYLKNYVNSLKSSNIEVSAFIDPANDQINSSGEIGFDFIELHTGKYAGLKGQDQYVELQKIIESSYYAVDIGLIVNAGHGLNYQNVKKIASINNMNELNIGHSIVSRALAVGLERAVREMKTLISIN.

Position 7 (Asn-7) interacts with 3-amino-2-oxopropyl phosphate. Residue 9–10 coordinates 1-deoxy-D-xylulose 5-phosphate; sequence DH. Residue Arg-18 participates in 3-amino-2-oxopropyl phosphate binding. Catalysis depends on His-43, which acts as the Proton acceptor. 1-deoxy-D-xylulose 5-phosphate is bound by residues Arg-45 and His-50. Glu-70 (proton acceptor) is an active-site residue. Thr-100 contributes to the 1-deoxy-D-xylulose 5-phosphate binding site. Catalysis depends on His-190, which acts as the Proton donor. Residues Gly-191 and 212 to 213 each bind 3-amino-2-oxopropyl phosphate; that span reads GH.

It belongs to the PNP synthase family. In terms of assembly, homooctamer; tetramer of dimers.

The protein localises to the cytoplasm. The enzyme catalyses 3-amino-2-oxopropyl phosphate + 1-deoxy-D-xylulose 5-phosphate = pyridoxine 5'-phosphate + phosphate + 2 H2O + H(+). It participates in cofactor biosynthesis; pyridoxine 5'-phosphate biosynthesis; pyridoxine 5'-phosphate from D-erythrose 4-phosphate: step 5/5. In terms of biological role, catalyzes the complicated ring closure reaction between the two acyclic compounds 1-deoxy-D-xylulose-5-phosphate (DXP) and 3-amino-2-oxopropyl phosphate (1-amino-acetone-3-phosphate or AAP) to form pyridoxine 5'-phosphate (PNP) and inorganic phosphate. The protein is Pyridoxine 5'-phosphate synthase of Prochlorococcus marinus subsp. pastoris (strain CCMP1986 / NIES-2087 / MED4).